The following is a 739-amino-acid chain: Copalyl diphosphate synthase 1 (739 aa).

Residue Lys154 participates in substrate binding. Mg(2+)-binding residues include Asp287 and Asp289. A DXDD motif motif is present at residues Asp287–Asp290. Lys373 serves as a coordination point for substrate.

Belongs to the terpene synthase family. Mg(2+) is required as a cofactor.

It carries out the reaction (2E,6E,10E)-geranylgeranyl diphosphate = (+)-copalyl diphosphate. It participates in secondary metabolite biosynthesis; terpenoid biosynthesis. Monofunctional diterpene synthase converting geranylgeranyl diphosphate to copalyl diphosphate. The polypeptide is Copalyl diphosphate synthase 1 (CPS1) (Selaginella moellendorffii (Spikemoss)).